Consider the following 336-residue polypeptide: Glyceraldehyde-3-phosphate dehydrogenase 1 (336 aa).

Residues 13–14 and aspartate 35 contribute to the NAD(+) site; that span reads RI. At serine 59 the chain carries Phosphoserine. Residue arginine 80 coordinates NAD(+). Serine 125 carries the post-translational modification Phosphoserine. D-glyceraldehyde 3-phosphate is bound by residues 151 to 153, threonine 182, 211 to 212, and arginine 234; these read SCT and TG. Residue cysteine 152 is the Nucleophile of the active site. Asparagine 316 is a binding site for NAD(+).

It belongs to the glyceraldehyde-3-phosphate dehydrogenase family. In terms of assembly, homotetramer.

It localises to the cytoplasm. It catalyses the reaction D-glyceraldehyde 3-phosphate + phosphate + NAD(+) = (2R)-3-phospho-glyceroyl phosphate + NADH + H(+). It participates in carbohydrate degradation; glycolysis; pyruvate from D-glyceraldehyde 3-phosphate: step 1/5. The polypeptide is Glyceraldehyde-3-phosphate dehydrogenase 1 (tdh1) (Schizosaccharomyces pombe (strain 972 / ATCC 24843) (Fission yeast)).